The sequence spans 708 residues: ARF GTPase-activating protein GIT2 (708 aa).

An Arf-GAP domain is found at Met-1–Glu-124. Residues Cys-11–Cys-34 form a C4-type zinc finger. 3 ANK repeats span residues Asp-132–Phe-161, Lys-166–Thr-195, and Ser-199–Asp-228. The segment at Ser-376–Val-592 is disordered. Residues Gln-384–Asp-401 show a composition bias toward acidic residues. Phosphoserine is present on residues Ser-393 and Ser-396. Phosphothreonine is present on Thr-400. Residues Ser-407–Gly-438 are compositionally biased toward polar residues. Positions Thr-504 to Trp-518 are enriched in low complexity. Residues Ser-508, Ser-511, and Ser-519 each carry the phosphoserine modification. Residues Ser-519–Lys-532 show a composition bias toward basic and acidic residues. Thr-536 carries the post-translational modification Phosphothreonine. Ser-563 carries the phosphoserine modification.

May form heterooligomers with GIT1. Directly interacts with protein Piccolo/PCLO. Interacts with PPFIA1 and PPFIA2. Interacts with ARHGEF7. Identified in a complex with ARHGEF6 and BIN2. Interacts with PAK3. Interacts with PXN/paxillin. Interacts with TGFB1I1. Forms a complex with EFNB1 and GRB4/NCK2. Post-translationally, tyrosine phosphorylated when coexpressed in cells with PTK2/FAK1 and SRC. In terms of tissue distribution, expressed in the brain (at protein level).

Its function is as follows. GTPase-activating protein for ADP ribosylation factor family members, including ARF1. The chain is ARF GTPase-activating protein GIT2 (Git2) from Mus musculus (Mouse).